Here is a 472-residue protein sequence, read N- to C-terminus: 2-amino-4-ketopentanoate thiolase beta subunit (472 aa).

Lys-102 carries the N6-(pyridoxal phosphate)lysine modification. Pyridoxal 5'-phosphate is bound by residues Asn-128 and Ala-238–Asn-242.

It belongs to the threonine synthase family. In terms of assembly, heterodimer with OrtA. It depends on pyridoxal 5'-phosphate as a cofactor.

It carries out the reaction D-alanine + acetyl-CoA = (2R)-2-amino-4-oxopentanoate + CoA. Involved in the ornithine fermentation pathway. Catalyzes the thiolytic cleavage of 2-amino-4-ketopentanoate (AKP) with coenzyme A (CoA) to form acetyl-CoA and alanine. It is strictly specific for AKP. This is 2-amino-4-ketopentanoate thiolase beta subunit from Unknown prokaryotic organism.